The chain runs to 1343 residues: DNA-directed RNA polymerase subunit beta (1343 aa).

The protein belongs to the RNA polymerase beta chain family. In terms of assembly, the RNAP catalytic core consists of 2 alpha, 1 beta, 1 beta' and 1 omega subunit. When a sigma factor is associated with the core the holoenzyme is formed, which can initiate transcription.

It catalyses the reaction RNA(n) + a ribonucleoside 5'-triphosphate = RNA(n+1) + diphosphate. DNA-dependent RNA polymerase catalyzes the transcription of DNA into RNA using the four ribonucleoside triphosphates as substrates. This is DNA-directed RNA polymerase subunit beta from Shewanella loihica (strain ATCC BAA-1088 / PV-4).